The primary structure comprises 272 residues: uncharacterized protein (272 aa).

This is an uncharacterized protein from Saccharomyces cerevisiae (strain ATCC 204508 / S288c) (Baker's yeast).